Here is an 867-residue protein sequence, read N- to C-terminus: Alanine--tRNA ligase (867 aa).

H559, H563, C661, and H665 together coordinate Zn(2+).

This sequence belongs to the class-II aminoacyl-tRNA synthetase family. The cofactor is Zn(2+).

It localises to the cytoplasm. The enzyme catalyses tRNA(Ala) + L-alanine + ATP = L-alanyl-tRNA(Ala) + AMP + diphosphate. Functionally, catalyzes the attachment of alanine to tRNA(Ala) in a two-step reaction: alanine is first activated by ATP to form Ala-AMP and then transferred to the acceptor end of tRNA(Ala). Also edits incorrectly charged Ser-tRNA(Ala) and Gly-tRNA(Ala) via its editing domain. This is Alanine--tRNA ligase from Aquifex aeolicus (strain VF5).